A 315-amino-acid polypeptide reads, in one-letter code: Aspartate carbamoyltransferase catalytic subunit (315 aa).

Residues Arg64 and Thr65 each contribute to the carbamoyl phosphate site. Residue Lys93 participates in L-aspartate binding. Carbamoyl phosphate-binding residues include Arg114, His142, and Gln145. L-aspartate contacts are provided by Arg175 and Arg237. Residues Leu276 and Pro277 each coordinate carbamoyl phosphate.

It belongs to the aspartate/ornithine carbamoyltransferase superfamily. ATCase family. As to quaternary structure, heterooligomer of catalytic and regulatory chains.

The catalysed reaction is carbamoyl phosphate + L-aspartate = N-carbamoyl-L-aspartate + phosphate + H(+). Its pathway is pyrimidine metabolism; UMP biosynthesis via de novo pathway; (S)-dihydroorotate from bicarbonate: step 2/3. Functionally, catalyzes the condensation of carbamoyl phosphate and aspartate to form carbamoyl aspartate and inorganic phosphate, the committed step in the de novo pyrimidine nucleotide biosynthesis pathway. The polypeptide is Aspartate carbamoyltransferase catalytic subunit (Thermofilum pendens (strain DSM 2475 / Hrk 5)).